Here is a 267-residue protein sequence, read N- to C-terminus: MLLVLIDVDGFMGQLYNEKGTQTILIPREVVIFYWEKNTASKILQLFFHGGIDPIFEKINQRSFSFQSRHIHHFALDESPLPNSIALPTDTLQAFKAGKKMIFQHLVKITKDHEQILLLHKGGPEGEWVRSFNIPNATVQNLNDLCCPSVEKLVLKKKDYISSSIGCPKHIQGSNHCPVFECHVLFKWIQENTSIVQGVLERPSLPYEKAVLFIEHRINMVDNHPFKKDSIKQNQKKKNWIATQFVQHGMYVDNGILGKIYNKYSLF.

Belongs to the asfivirus I267L family.

In Ornithodoros (relapsing fever ticks), this protein is Protein I267L.